Reading from the N-terminus, the 518-residue chain is Serine hydroxymethyltransferase, mitochondrial (518 aa).

Residues 1–31 (MAMAMALRKLSSSVNKSSRPLFSASSLYYKS) constitute a mitochondrion transit peptide. Lys287 is subject to N6-(pyridoxal phosphate)lysine.

This sequence belongs to the SHMT family. In terms of assembly, homotetramer. It depends on pyridoxal 5'-phosphate as a cofactor.

Its subcellular location is the mitochondrion. The enzyme catalyses (6R)-5,10-methylene-5,6,7,8-tetrahydrofolate + glycine + H2O = (6S)-5,6,7,8-tetrahydrofolate + L-serine. It participates in one-carbon metabolism; tetrahydrofolate interconversion. Catalyzes the interconversion of serine and glycine. The polypeptide is Serine hydroxymethyltransferase, mitochondrial (Pisum sativum (Garden pea)).